The chain runs to 671 residues: DNA ligase (671 aa).

NAD(+) contacts are provided by residues 34–38, 83–84, and Glu-117; these read DAEYD and SL. The N6-AMP-lysine intermediate role is filled by Lys-119. NAD(+) is bound by residues Arg-140, Glu-177, Lys-293, and Lys-317. 4 residues coordinate Zn(2+): Cys-411, Cys-414, Cys-429, and Cys-434. Residues 591 to 671 enclose the BRCT domain; that stretch reads KVGGKFTGKT…EFLQMLEGEQ (81 aa).

It belongs to the NAD-dependent DNA ligase family. LigA subfamily. It depends on Mg(2+) as a cofactor. Requires Mn(2+) as cofactor.

It catalyses the reaction NAD(+) + (deoxyribonucleotide)n-3'-hydroxyl + 5'-phospho-(deoxyribonucleotide)m = (deoxyribonucleotide)n+m + AMP + beta-nicotinamide D-nucleotide.. In terms of biological role, DNA ligase that catalyzes the formation of phosphodiester linkages between 5'-phosphoryl and 3'-hydroxyl groups in double-stranded DNA using NAD as a coenzyme and as the energy source for the reaction. It is essential for DNA replication and repair of damaged DNA. This chain is DNA ligase, found in Geobacter metallireducens (strain ATCC 53774 / DSM 7210 / GS-15).